The following is a 284-amino-acid chain: MFKKFKPVTPGTRQLVLPAFDELTRQGDLTGKRTRKSVRPNKKLSFFKKSSGGRDNLGHISCRHRGGGAKRLYRVIDFKRNKDGIEAKVVSVEYDPNRSAYIALLNYADGEKRYILAPKGIKRGDQVISGEGSPFKLGCCMTLKSMPLGSTVHNIEMRPHSGGKLVRSAGLAAQVIAKTPGYVTLKMPSGEFRMLNEGCRATIGEVSNADHNLCVDGKAGRKRWKGVRPTVRGTAMNPVDHPHGGGEGRHNGYIPRTPWGKVTKGLKTRDKRKSNKWIVKDRRK.

The disordered stretch occupies residues 232-284; sequence RGTAMNPVDHPHGGGEGRHNGYIPRTPWGKVTKGLKTRDKRKSNKWIVKDRRK. A compositionally biased stretch (basic and acidic residues) spans 240-250; the sequence is DHPHGGGEGRH. A compositionally biased stretch (basic residues) spans 264–284; it reads KGLKTRDKRKSNKWIVKDRRK.

This sequence belongs to the universal ribosomal protein uL2 family. In terms of assembly, part of the 50S ribosomal subunit. Forms a bridge to the 30S subunit in the 70S ribosome.

Its function is as follows. One of the primary rRNA binding proteins. Required for association of the 30S and 50S subunits to form the 70S ribosome, for tRNA binding and peptide bond formation. It has been suggested to have peptidyltransferase activity; this is somewhat controversial. Makes several contacts with the 16S rRNA in the 70S ribosome. The chain is Large ribosomal subunit protein uL2 from Chlamydia felis (strain Fe/C-56) (Chlamydophila felis).